The primary structure comprises 386 residues: Acetylornithine aminotransferase (386 aa).

Pyridoxal 5'-phosphate-binding positions include glycine 96–alanine 97 and phenylalanine 123. A N(2)-acetyl-L-ornithine-binding site is contributed by arginine 126. A pyridoxal 5'-phosphate-binding site is contributed by aspartate 208–glutamine 211. The residue at position 237 (lysine 237) is an N6-(pyridoxal phosphate)lysine. N(2)-acetyl-L-ornithine is bound at residue serine 265. Threonine 266 contributes to the pyridoxal 5'-phosphate binding site.

Belongs to the class-III pyridoxal-phosphate-dependent aminotransferase family. ArgD subfamily. As to quaternary structure, homodimer. Requires pyridoxal 5'-phosphate as cofactor.

It localises to the cytoplasm. The catalysed reaction is N(2)-acetyl-L-ornithine + 2-oxoglutarate = N-acetyl-L-glutamate 5-semialdehyde + L-glutamate. It functions in the pathway amino-acid biosynthesis; L-arginine biosynthesis; N(2)-acetyl-L-ornithine from L-glutamate: step 4/4. The chain is Acetylornithine aminotransferase from Bacillus cereus (strain ATCC 14579 / DSM 31 / CCUG 7414 / JCM 2152 / NBRC 15305 / NCIMB 9373 / NCTC 2599 / NRRL B-3711).